Here is a 508-residue protein sequence, read N- to C-terminus: Glycogen synthase (508 aa).

Residue lysine 15 participates in ADP-alpha-D-glucose binding. A disordered region spans residues 483–508 (ARNRAETRPQTASALSYREPRPAAEY).

Belongs to the glycosyltransferase 1 family. Bacterial/plant glycogen synthase subfamily.

The enzyme catalyses [(1-&gt;4)-alpha-D-glucosyl](n) + ADP-alpha-D-glucose = [(1-&gt;4)-alpha-D-glucosyl](n+1) + ADP + H(+). It participates in glycan biosynthesis; glycogen biosynthesis. Functionally, synthesizes alpha-1,4-glucan chains using ADP-glucose. In Paracidovorax citrulli (strain AAC00-1) (Acidovorax citrulli), this protein is Glycogen synthase.